Here is a 146-residue protein sequence, read N- to C-terminus: Protein MGF 100-3L (146 aa).

The protein belongs to the asfivirus MGF 100 family.

Functionally, plays a role in virus cell tropism, and may be required for efficient virus replication in macrophages. In Ornithodoros (relapsing fever ticks), this protein is Protein MGF 100-3L.